The following is a 68-amino-acid chain: Large ribosomal subunit protein uL29 (68 aa).

It belongs to the universal ribosomal protein uL29 family.

The chain is Large ribosomal subunit protein uL29 from Chloroflexus aurantiacus (strain ATCC 29364 / DSM 637 / Y-400-fl).